A 705-amino-acid chain; its full sequence is Elongation factor G (705 aa).

The tr-type G domain maps to 8-294 (ELYRNFGIMA…SVIDYLPSPL (287 aa)). GTP contacts are provided by residues 17–24 (AHIDAGKT), 92–96 (DTPGH), and 146–149 (NKMD).

This sequence belongs to the TRAFAC class translation factor GTPase superfamily. Classic translation factor GTPase family. EF-G/EF-2 subfamily.

The protein localises to the cytoplasm. Catalyzes the GTP-dependent ribosomal translocation step during translation elongation. During this step, the ribosome changes from the pre-translocational (PRE) to the post-translocational (POST) state as the newly formed A-site-bound peptidyl-tRNA and P-site-bound deacylated tRNA move to the P and E sites, respectively. Catalyzes the coordinated movement of the two tRNA molecules, the mRNA and conformational changes in the ribosome. The polypeptide is Elongation factor G (Cereibacter sphaeroides (strain KD131 / KCTC 12085) (Rhodobacter sphaeroides)).